The sequence spans 175 residues: Large ribosomal subunit protein uL10 (175 aa).

The protein belongs to the universal ribosomal protein uL10 family. In terms of assembly, part of the ribosomal stalk of the 50S ribosomal subunit. The N-terminus interacts with L11 and the large rRNA to form the base of the stalk. The C-terminus forms an elongated spine to which L12 dimers bind in a sequential fashion forming a multimeric L10(L12)X complex.

Its function is as follows. Forms part of the ribosomal stalk, playing a central role in the interaction of the ribosome with GTP-bound translation factors. This chain is Large ribosomal subunit protein uL10, found in Methylobacterium sp. (strain 4-46).